Consider the following 170-residue polypeptide: Protein ripply3 (170 aa).

The WRPW motif motif lies at 40–43; that stretch reads WRPW. Residues 79 to 114 form a ripply homology domain region; the sequence is HPVRLYMPKSKTSEYLQHMGKKVLANFPVQATIHFY. The span at 143–152 shows a compositional bias: polar residues; sequence VNSSRGSGDN. Residues 143–170 are disordered; it reads VNSSRGSGDNYSVPGGPKRNISSHTGSA.

The protein belongs to the ripply family. In terms of assembly, interacts with tbx1 and tle4/grg4.

The protein resides in the nucleus. Its function is as follows. Acts as a transcriptional corepressor. Negative regulator of the transcriptional activity of tbx1 that plays a key role in pharyngeal development. Plays a role in the formation of the anteroposterior (AP) axis during embryonic development; required to establish the posterolateral border of the pre-placodal ectoderm (PPE) acting downstream of the retinoic acid receptor (RAR) signaling. The polypeptide is Protein ripply3 (Xenopus tropicalis (Western clawed frog)).